Here is a 39-residue protein sequence, read N- to C-terminus: Cytochrome b559 subunit beta (39 aa).

Residues 14–30 traverse the membrane as a helical segment; the sequence is WLAIHGLAVPTVFSLGS. His-18 serves as a coordination point for heme.

This sequence belongs to the PsbE/PsbF family. As to quaternary structure, heterodimer of an alpha subunit and a beta subunit. PSII is composed of 1 copy each of membrane proteins PsbA, PsbB, PsbC, PsbD, PsbE, PsbF, PsbH, PsbI, PsbJ, PsbK, PsbL, PsbM, PsbT, PsbX, PsbY, PsbZ, Psb30/Ycf12, at least 3 peripheral proteins of the oxygen-evolving complex and a large number of cofactors. It forms dimeric complexes. The cofactor is heme b.

Its subcellular location is the plastid. It localises to the chloroplast thylakoid membrane. Its function is as follows. This b-type cytochrome is tightly associated with the reaction center of photosystem II (PSII). PSII is a light-driven water:plastoquinone oxidoreductase that uses light energy to abstract electrons from H(2)O, generating O(2) and a proton gradient subsequently used for ATP formation. It consists of a core antenna complex that captures photons, and an electron transfer chain that converts photonic excitation into a charge separation. The protein is Cytochrome b559 subunit beta of Huperzia lucidula (Shining clubmoss).